We begin with the raw amino-acid sequence, 316 residues long: Deoxyribonuclease-1-like 1 (316 aa).

The N-terminal stretch at 1–28 is a signal peptide; sequence MHSSGGFQKAIHGHALLLLLLLASGAET. Residues Glu-107 and His-158 contribute to the active site. Cys-197 and Cys-234 are joined by a disulfide. The N-linked (GlcNAc...) asparagine glycan is linked to Asn-271.

It belongs to the DNase I family.

Its subcellular location is the endoplasmic reticulum. The chain is Deoxyribonuclease-1-like 1 (DNASE1L1) from Bos taurus (Bovine).